The following is a 549-amino-acid chain: Antagonist of mitotic exit network protein 1 (549 aa).

Polar residues predominate over residues 1 to 11 (MKLERVSSNGS). The tract at residues 1–39 (MKLERVSSNGSFKRGRDIQSLESPCTRPLKKMSPSPSFT) is disordered.

The protein belongs to the AMN1 family. Interacts with TEM1.

It localises to the cytoplasm. Its subcellular location is the nucleus. Functionally, negative regulator of the mitotic exit network (MEN), required for multiple cell cycle checkpoints. Acts in the daughter cell to inhibit the mitotic exit pathway once MEN has executed its function. Through its binding ability to TEM1, interferes with the TEM1-CDC5 association, required for CDC5 kinase activation and MEN activation. Required for daughter cell separation and chromosome stability. Involved in copper sensitivity. The chain is Antagonist of mitotic exit network protein 1 (AMN1) from Saccharomyces cerevisiae (strain ATCC 204508 / S288c) (Baker's yeast).